A 347-amino-acid chain; its full sequence is 4-hydroxy-2-oxovalerate aldolase 2 (347 aa).

Residues 7–259 form the Pyruvate carboxyltransferase domain; that stretch reads VRITDTSLRD…KTGIDFFDIA (253 aa). A substrate-binding site is contributed by 15-16; the sequence is RD. Mn(2+) is bound at residue Asp16. Catalysis depends on His19, which acts as the Proton acceptor. Ser169 and His198 together coordinate substrate. Mn(2+) contacts are provided by His198 and His200. Substrate is bound at residue Tyr289.

It belongs to the 4-hydroxy-2-oxovalerate aldolase family.

It carries out the reaction (S)-4-hydroxy-2-oxopentanoate = acetaldehyde + pyruvate. This is 4-hydroxy-2-oxovalerate aldolase 2 from Mycobacterium ulcerans (strain Agy99).